A 406-amino-acid chain; its full sequence is 1H-pyrrole-2-carbonyl-[peptidyl-carrier protein] brominase (406 aa).

FAD-binding residues include A17, E36, R42, H44, I45, S48, R101, V124, D291, and V304.

Belongs to the flavin-dependent halogenase family.

It catalyses the reaction (1H-pyrrole-2-carbonyl)-[peptidyl-carrier protein] + 3 bromide + 3 FADH2 + 3 O2 = (3,4,5-tribromo-1H-pyrrole-2-carbonyl)-[peptidyl-carrier protein] + 3 FAD + 6 H2O. The catalysed reaction is (1H-pyrrole-2-carbonyl)-[peptidyl-carrier protein] + bromide + FADH2 + O2 = (5-bromo-1H-pyrrole-2-carbonyl)-[peptidyl-carrier protein] + FAD + 2 H2O. The enzyme catalyses (5-bromo-1H-pyrrole-2-carbonyl)-[peptidyl-carrier protein] + bromide + FADH2 + O2 = (4,5-dibromo-1H-pyrrole-2-carbonyl)-[peptidyl-carrier protein] + FAD + 2 H2O. It carries out the reaction (4,5-dibromo-1H-pyrrole-2-carbonyl)-[peptidyl-carrier protein] + bromide + FADH2 + O2 = (3,4,5-tribromo-1H-pyrrole-2-carbonyl)-[peptidyl-carrier protein] + FAD + 2 H2O. Functionally, brominase involved in the biosynthesis of polybrominated aromatic organic compounds. Catalyzes three successive rounds of bromination of pyrrolyl-S-Bmp1 to produce mono-, di- and tribromopyrrolyl-S-Bmp1. This Pseudoalteromonas luteoviolacea (strain 2ta16) protein is 1H-pyrrole-2-carbonyl-[peptidyl-carrier protein] brominase.